Consider the following 162-residue polypeptide: uncharacterized protein (162 aa).

This is an uncharacterized protein from Acanthamoeba polyphaga (Amoeba).